A 389-amino-acid polypeptide reads, in one-letter code: Teichoic acid glycerol-phosphate transferase (389 aa).

It belongs to the CDP-glycerol glycerophosphotransferase family.

The protein resides in the cell membrane. The catalysed reaction is 4-O-[(2R)-glycerylphospho]-N-acetyl-beta-D-mannosaminyl-(1-&gt;4)-N-acetyl-alpha-D-glucosaminyl di-trans,octa-cis-undecaprenyl diphosphate + CDP-glycerol = 4-O-[di(2R)-glycerylphospho]-N-acetyl-beta-D-mannosaminyl-(1-&gt;4)-N-acetyl-alpha-D-glucosaminyl di-trans,octa-cis-undecaprenyl diphosphate + CMP + H(+). Its pathway is cell wall biogenesis; poly(ribitol phosphate) teichoic acid biosynthesis. In terms of biological role, catalyzes the addition of a second glycerol phosphate unit from CDP-glycerol to the prenolpyrophosphate-linked disaccharide, to complete the linkage unit. The sequence is that of Teichoic acid glycerol-phosphate transferase (tarF) from Staphylococcus aureus (strain NCTC 8325 / PS 47).